The following is an 874-amino-acid chain: Alanine--tRNA ligase (874 aa).

Residues histidine 562, histidine 566, cysteine 665, and histidine 669 each contribute to the Zn(2+) site.

Belongs to the class-II aminoacyl-tRNA synthetase family. Zn(2+) serves as cofactor.

The protein localises to the cytoplasm. The enzyme catalyses tRNA(Ala) + L-alanine + ATP = L-alanyl-tRNA(Ala) + AMP + diphosphate. Functionally, catalyzes the attachment of alanine to tRNA(Ala) in a two-step reaction: alanine is first activated by ATP to form Ala-AMP and then transferred to the acceptor end of tRNA(Ala). Also edits incorrectly charged Ser-tRNA(Ala) and Gly-tRNA(Ala) via its editing domain. This is Alanine--tRNA ligase from Pseudomonas putida (strain W619).